Reading from the N-terminus, the 150-residue chain is 3-hydroxyacyl-[acyl-carrier-protein] dehydratase FabZ (150 aa).

The active site involves His-53.

It belongs to the thioester dehydratase family. FabZ subfamily.

The protein localises to the cytoplasm. The catalysed reaction is a (3R)-hydroxyacyl-[ACP] = a (2E)-enoyl-[ACP] + H2O. In terms of biological role, involved in unsaturated fatty acids biosynthesis. Catalyzes the dehydration of short chain beta-hydroxyacyl-ACPs and long chain saturated and unsaturated beta-hydroxyacyl-ACPs. In Photorhabdus laumondii subsp. laumondii (strain DSM 15139 / CIP 105565 / TT01) (Photorhabdus luminescens subsp. laumondii), this protein is 3-hydroxyacyl-[acyl-carrier-protein] dehydratase FabZ.